The following is a 493-amino-acid chain: MSLLKMEYNLYAELKKMTCGQPLSLFNEDGDFVEVEPGSSFKFLIPKGFYASPSVKTSLVFETLTTTDNKITSINPTNAPKLYPLQRKVVSEVVSNMRKMIESKRPLYITLHLACGFGKTITTCYLMATHGRKTVICVPNKMLIHQWKTQVEAVGLEHKISIDGVSSLLKELKTQSPDVLIVVSRHLTNDAFCKYINKHYDLFILDESHTYNLMNNTAVTRFLAYYPPMMCYFLTATPRPANRIYCNSIINIAKLSDLKKTIYAVDSFFEPYSTDNIRHMIKRLDGPSNKYHIYTEKLLSVDEPRNQLILDTLVEEFKSGTINRILVITKLREHMVFFYKRLLDLFGPEVVFIGDAQNRRTPDMVKSIKELNRFIFVSTLFYSGTGLDIPSLDSLFICSAVINNMQIEQLLGRVCRETELLDRTVYVFPSTSIKEIKYMIGNFMQRIISLSVDKLGFKQKSYRKHQESDPTSVCTTSSREERVLNRIFNSQNR.

The 157-residue stretch at M100–S256 folds into the Helicase ATP-binding domain. L113–T120 is an ATP binding site. The DESH box motif lies at D206 to H209. The Helicase C-terminal domain maps to I309–G456.

The protein belongs to the helicase family. Poxviruses subfamily. Interacts with OPG087. Might be part of a transcription complex composed at least of OPG087, OPG110, and OPG145.

The protein resides in the virion. Its function is as follows. DNA helicase which seems to act as a postreplicative transcription termination factor. Involved in ATP-dependent release of nascent RNA. Forms a stable complex with single-stranded DNA, and to a lesser extent RNA. In Homo sapiens (Human), this protein is Transcript termination protein OPG145 (OPG145).